The chain runs to 102 residues: Spexin prohormone 1 (102 aa).

A signal peptide spans 1 to 26 (MKDLRTLAAYALALLLLATFVSHSWS). A propeptide spanning residues 27–35 (APKGSFQRR) is cleaved from the precursor. Position 49 is a glutamine amide (Gln-49). The propeptide occupies 50 to 102 (GRRFVSEDRNEGDLYDTIRLESRSQNTENLSISKAAAFLLNILQQARDEDEPY).

Belongs to the spexin family. As to expression, mainly expressed in the brain and ovary. Detected bilaterally in the adult brainstem. Expressed in neurons in the dorsal habenula (dHb). In the dHb some neurons project into the interpeduncular nucleus (IPN) where expression often overlaps with galr2a and galr2b. Weakly expressed in the liver, intestine, kidney, heart and gill.

It is found in the secreted. Its subcellular location is the extracellular space. It localises to the cytoplasmic vesicle. The protein localises to the secretory vesicle. Functionally, plays a role in the regulation of food intake and energy metabolism. May also be involved in suppressing the anxiety response by promoting the expression of serotonin-related genes such as fev, tph2 and slc6a4a. Its function is as follows. Acts as a ligand for galanin receptors galr2a and galr2b. Brain administration of the peptide inhibits food consumption and elevates levels of glucose, triacylglycerol and cholesterol in the serum. Likely to control food intake by regulating appetite related genes which includes the negative regulation of the orexigenic factor agrp. By controlling food intake it may act as a satiety factor in energy metabolism. This chain is Spexin prohormone 1 (spx), found in Danio rerio (Zebrafish).